Reading from the N-terminus, the 169-residue chain is Large ribosomal subunit protein uL10 (169 aa).

The protein belongs to the universal ribosomal protein uL10 family. As to quaternary structure, part of the ribosomal stalk of the 50S ribosomal subunit. The N-terminus interacts with L11 and the large rRNA to form the base of the stalk. The C-terminus forms an elongated spine to which L12 dimers bind in a sequential fashion forming a multimeric L10(L12)X complex.

Its function is as follows. Forms part of the ribosomal stalk, playing a central role in the interaction of the ribosome with GTP-bound translation factors. This Deinococcus geothermalis (strain DSM 11300 / CIP 105573 / AG-3a) protein is Large ribosomal subunit protein uL10.